Consider the following 315-residue polypeptide: T cell receptor beta chain MC.7.G5 (315 aa).

The first 21 residues, 1–21, serve as a signal peptide directing secretion; the sequence is MTIRLLCYMGFYFLGAGLMEA. Residues 22 to 114 form the Ig-like V-type domain; that stretch reads DIYQTPRYLV…TSQYLCASSE (93 aa). The interval 22-114 is t cell receptor beta variable 25-1; sequence DIYQTPRYLV…TSQYLCASSE (93 aa). An intrachain disulfide couples Cys42 to Cys110. The interval 46-50 is CDR1; the sequence is MGHDK. The CDR2 stretch occupies residues 68–73; the sequence is SYGVNS. N-linked (GlcNAc...) asparagine glycosylation occurs at Asn72. A CDR3 region spans residues 110–127; it reads CASSEARGLAEFTDTQYF. Residues 122 to 136 form a t cell receptor beta joining 2-3 region; sequence TDTQYFGPGTRLTVL. A t cell receptor beta constant 2 region spans residues 138–315; sequence DLKNVFPPEV…AMVKRKDSRG (178 aa). The region spanning 145 to 254 is the Ig-like C1-type domain; the sequence is PEVAVFEPSE…WTQDRAKPVT (110 aa). Residues Cys167 and Cys232 are joined by a disulfide bond. Asn206 carries an N-linked (GlcNAc...) asparagine glycan. The segment at 267 to 281 is connecting peptide; the sequence is CGFTSESYQQGVLSA. A helical membrane pass occupies residues 282–304; sequence TILYEILLGKATLYAVLVSALVL. The Cytoplasmic segment spans residues 305-315; it reads MAMVKRKDSRG.

Disulfide-linked heterodimer with TRAV38-2DV8*01J31*01C*01 alpha chain. The alpha-beta TR associates with the transmembrane signaling CD3 coreceptor proteins to form the TR-CD3 (TCR). The assembly of alpha-beta TR heterodimers with CD3 occurs in the endoplasmic reticulum where a single alpha-beta TR heterodimer associates with one CD3D-CD3E heterodimer, one CD3G-CD3E heterodimer and one CD247 homodimer forming a stable octameric structure. CD3D-CD3E and CD3G-CD3E heterodimers preferentially associate with TR alpha and TR beta chains (via TM domain), respectively. The association of the CD247 homodimer is the last step of TCR assembly in the endoplasmic reticulum and is required for transport to the cell surface. In terms of tissue distribution, expressed in MR1-restricted CD8-positive T cells.

The protein localises to the cell membrane. The beta chain of TRAV38-2DV8*01J31*01C*01/TRBV25-1*01J2S3*01C2*01 alpha-beta T cell receptor (TR) clonotype that displays pan-cancer cell recognition via the invariant MR1 molecule. On CD8-positive T cell clone MC.7.G5, likely recognizes tumor-specific or -associated metabolite(s) essential for cancer cell survival, triggering killing of many cancer cell types including lung, melanoma, leukemia, colon, breast, prostate, bone and ovarian cancer cells. Mediates cancer cell cytotoxicity in an HLA-independent manner. Has no reactivity to healthy cells even stressed or infected by bacteria. Antigen recognition initiates TR-CD3 clustering on the cell surface and intracellular activation of LCK that phosphorylates the ITAM motifs of CD3G, CD3D, CD3E and CD247 enabling the recruitment of ZAP70. In turn, ZAP70 phosphorylates LAT, which recruits numerous signaling molecules to form the LAT signalosome. The LAT signalosome propagates signal branching to three major signaling pathways, the calcium, the mitogen-activated protein kinase (MAPK) kinase and the nuclear factor NF-kappa-B (NF-kB) pathways, leading to the mobilization of transcription factors that are critical for gene expression and essential for T cell differentiation into effector/memory T cells. The chain is T cell receptor beta chain MC.7.G5 from Homo sapiens (Human).